We begin with the raw amino-acid sequence, 460 residues long: Elongation factor 1-alpha-A (460 aa).

Residue Gly2 is modified to N,N,N-trimethylglycine. Residue Lys3 is modified to N6,N6-dimethyllysine; alternate. Position 3 is an N6-methyllysine; alternate (Lys3). The tr-type G domain maps to Lys5–Thr240. The segment at Gly14–Ser21 is G1. Gly14–Ser21 provides a ligand contact to GTP. Residue Lys30 is modified to N6-methyllysine. Positions Gly70–Asp74 are G2. The residue at position 79 (Lys79) is an N6,N6,N6-trimethyllysine. A G3 region spans residues Asp91–Gly94. Residues Asp91–His95 and Asn153–Asp156 each bind GTP. The interval Asn153–Asp156 is G4. A G5 region spans residues Ser192–Phe194. Lys316 carries the N6,N6-dimethyllysine; alternate modification. Lys316 carries the N6-methyllysine; alternate modification. An N6-methyllysine modification is found at Lys390.

Belongs to the TRAFAC class translation factor GTPase superfamily. Classic translation factor GTPase family. EF-Tu/EF-1A subfamily.

Its subcellular location is the cytoplasm. This protein promotes the GTP-dependent binding of aminoacyl-tRNA to the A-site of ribosomes during protein biosynthesis. This chain is Elongation factor 1-alpha-A (tef101), found in Schizosaccharomyces pombe (strain 972 / ATCC 24843) (Fission yeast).